The chain runs to 185 residues: Pycsar effector protein EcPycTM (185 aa).

A run of 3 helical transmembrane segments spans residues 32-52 (ALLL…VGYF), 63-83 (MVIF…SVLL), and 141-161 (FILS…VSWI).

It localises to the cell inner membrane. Functionally, pycsar (pyrimidine cyclase system for antiphage resistance) provides immunity against bacteriophage. The pyrimidine cyclase (PycC) synthesizes cyclic nucleotides in response to infection; these serve as specific second messenger signals. The signals activate the adjacent effector, leading to bacterial cell death and abortive phage infection. A clade E Pycsar system. In terms of biological role, the effector component of a two-gene Pycsar system. Expression of this and adjacent cytidylate cyclase EcPycC (AC P0DV24) confers resistance to bacteriophage P1 and T5; this protein is required for resistance. When cells expressing the Pycsar system are infected by phage T5 at low multiplicity of infection (0.2 MOI) the culture survives, at 2.0 MOI bacteria enter growth arrest. The same cells enter growth arrest after exposure to 250 uM cCMP but not cUMP; this effector protein responds only to cCMP, usually produced by its cognate NTP cyclase. Some of the cells treated with cCMP have abnormal membrane protrusions, probably due to effects on membrane integrity. This chain is Pycsar effector protein EcPycTM, found in Escherichia coli.